Reading from the N-terminus, the 1040-residue chain is Regulator of telomere elongation helicase 1 homolog (1040 aa).

In terms of domain architecture, Helicase ATP-binding spans 52-355 (RGINVEFPFE…KGLLLKLQEL (304 aa)). 87–94 (SPTGTGKT) contacts ATP. A disordered region spans residues 117–137 (RKNSAIPWSDSDEPLSQSGGG). [4Fe-4S] cluster-binding residues include Cys181, Cys202, Cys210, and Cys246. The DEAH box signature appears at 289–292 (DEAH). A disordered region spans residues 926–949 (KVPESQGSASSSVLTAKGNGGGDK). The span at 930 to 939 (SQGSASSSVL) shows a compositional bias: polar residues. The PIP-box; degenerate signature appears at 992–999 (QSIVQLFC).

This sequence belongs to the helicase family. RAD3/XPD subfamily.

The protein resides in the nucleus. It catalyses the reaction ATP + H2O = ADP + phosphate + H(+). In terms of biological role, a probable ATP-dependent DNA helicase implicated in DNA replication, DNA repair and the maintenance of genomic stability. Acts as an anti-recombinase to counteract toxic recombination and limit crossover during meiosis. Regulates meiotic recombination and crossover homeostasis by physically dissociating strand invasion events and thereby promotes noncrossover repair by meiotic synthesis dependent strand annealing (SDSA) as well as disassembly of D loop recombination intermediates. Also plays a role in preserving the stability of 45S rDNA repeats. The sequence is that of Regulator of telomere elongation helicase 1 homolog from Arabidopsis thaliana (Mouse-ear cress).